A 297-amino-acid polypeptide reads, in one-letter code: Homoserine kinase (297 aa).

ATP is bound at residue proline 82–serine 92.

The protein belongs to the GHMP kinase family. Homoserine kinase subfamily.

Its subcellular location is the cytoplasm. It catalyses the reaction L-homoserine + ATP = O-phospho-L-homoserine + ADP + H(+). It functions in the pathway amino-acid biosynthesis; L-threonine biosynthesis; L-threonine from L-aspartate: step 4/5. Catalyzes the ATP-dependent phosphorylation of L-homoserine to L-homoserine phosphate. This is Homoserine kinase from Bacillus cereus (strain ZK / E33L).